The sequence spans 1083 residues: Carbamoyl phosphate synthase large chain (1083 aa).

The segment at 1 to 402 (MPKRTDIRKV…AYMKALRSME (402 aa)) is carboxyphosphate synthetic domain. ATP contacts are provided by R129, R169, G175, G176, E208, V210, E215, G241, V242, H243, Q285, and E299. In terms of domain architecture, ATP-grasp 1 spans 133–328 (KAAMQKIGVA…IAKIAAKLAL (196 aa)). Positions 285, 299, and 301 each coordinate Mg(2+). Mn(2+) is bound by residues Q285, E299, and N301. The oligomerization domain stretch occupies residues 403-554 (LGRVGLESPE…YSTYEEEDEA (152 aa)). The carbamoyl phosphate synthetic domain stretch occupies residues 555–937 (PPTDRQKVLI…AFAKSQLAAG (383 aa)). One can recognise an ATP-grasp 2 domain in the interval 679-871 (AALIEKLGLK…MAKIAALCMV (193 aa)). Positions 715, 754, 756, 761, 787, 788, 789, 790, 830, and 842 each coordinate ATP. Mg(2+) is bound by residues Q830, E842, and N844. Q830, E842, and N844 together coordinate Mn(2+). Residues 938–1078 (VKLPKSGKVF…QEYLGINAAP (141 aa)) form the MGS-like domain. The tract at residues 938–1083 (VKLPKSGKVF…INAAPPGTRR (146 aa)) is allosteric domain.

This sequence belongs to the CarB family. In terms of assembly, composed of two chains; the small (or glutamine) chain promotes the hydrolysis of glutamine to ammonia, which is used by the large (or ammonia) chain to synthesize carbamoyl phosphate. Tetramer of heterodimers (alpha,beta)4. Mg(2+) serves as cofactor. Mn(2+) is required as a cofactor.

It catalyses the reaction hydrogencarbonate + L-glutamine + 2 ATP + H2O = carbamoyl phosphate + L-glutamate + 2 ADP + phosphate + 2 H(+). The enzyme catalyses hydrogencarbonate + NH4(+) + 2 ATP = carbamoyl phosphate + 2 ADP + phosphate + 2 H(+). Its pathway is amino-acid biosynthesis; L-arginine biosynthesis; carbamoyl phosphate from bicarbonate: step 1/1. It functions in the pathway pyrimidine metabolism; UMP biosynthesis via de novo pathway; (S)-dihydroorotate from bicarbonate: step 1/3. In terms of biological role, large subunit of the glutamine-dependent carbamoyl phosphate synthetase (CPSase). CPSase catalyzes the formation of carbamoyl phosphate from the ammonia moiety of glutamine, carbonate, and phosphate donated by ATP, constituting the first step of 2 biosynthetic pathways, one leading to arginine and/or urea and the other to pyrimidine nucleotides. The large subunit (synthetase) binds the substrates ammonia (free or transferred from glutamine from the small subunit), hydrogencarbonate and ATP and carries out an ATP-coupled ligase reaction, activating hydrogencarbonate by forming carboxy phosphate which reacts with ammonia to form carbamoyl phosphate. The sequence is that of Carbamoyl phosphate synthase large chain from Myxococcus xanthus (strain DK1622).